A 508-amino-acid polypeptide reads, in one-letter code: 6-phosphogluconate dehydrogenase, decarboxylating 2, chloroplastic (508 aa).

The N-terminal 12 residues, 1 to 12 (MASPAPAPPAAS), are a transit peptide targeting the chloroplast. NADP(+)-binding positions include 28–33 (GLATMG), 51–53 (NRT), 95–97 (VQA), and Asn-123. Residues Asn-123 and 149–151 (SGG) contribute to the substrate site. Lys-203 serves as the catalytic Proton acceptor. Residue 206–207 (HN) coordinates substrate. Glu-210 serves as the catalytic Proton donor. Residues Tyr-211, Lys-284, Arg-311, Arg-475, and His-481 each contribute to the substrate site.

The protein belongs to the 6-phosphogluconate dehydrogenase family. In terms of assembly, homodimer.

It is found in the plastid. It localises to the chloroplast. The enzyme catalyses 6-phospho-D-gluconate + NADP(+) = D-ribulose 5-phosphate + CO2 + NADPH. It functions in the pathway carbohydrate degradation; pentose phosphate pathway; D-ribulose 5-phosphate from D-glucose 6-phosphate (oxidative stage): step 3/3. Functionally, catalyzes the oxidative decarboxylation of 6-phosphogluconate to ribulose 5-phosphate and CO(2), with concomitant reduction of NADP to NADPH. This Oryza sativa subsp. japonica (Rice) protein is 6-phosphogluconate dehydrogenase, decarboxylating 2, chloroplastic (G6PGH2).